Consider the following 324-residue polypeptide: Corticotropin-releasing factor-binding protein (324 aa).

A signal peptide spans 1 to 23 (MAPTLKLQCHFILVCLLALRGES). 5 disulfides stabilise this stretch: Cys62/Cys83, Cys106/Cys143, Cys185/Cys207, Cys239/Cys266, and Cys279/Cys320. A glycan (N-linked (GlcNAc...) asparagine) is linked at Asn206.

It belongs to the CRF-binding protein family.

The protein localises to the secreted. Binds CRF and inactivates it. May prevent inappropriate pituitary-adrenal stimulation in pregnancy. The protein is Corticotropin-releasing factor-binding protein (CRHBP) of Ovis aries (Sheep).